An 87-amino-acid polypeptide reads, in one-letter code: Large ribosomal subunit protein bL27 (87 aa).

Residues 1 to 25 (MAHKKGASSSRNGRDSNAQRLGVKR) are disordered. Positions 7-19 (ASSSRNGRDSNAQ) are enriched in polar residues.

This sequence belongs to the bacterial ribosomal protein bL27 family.

This is Large ribosomal subunit protein bL27 from Rhodococcus jostii (strain RHA1).